A 246-amino-acid polypeptide reads, in one-letter code: Phosphomannomutase (246 aa).

Residue Asp9 is the Nucleophile of the active site. Positions 9 and 11 each coordinate Mg(2+). Asp11 serves as the catalytic Proton donor/acceptor. Residues Arg121, Arg132, Arg139, Ser179, and Asp181 each coordinate alpha-D-mannose 1-phosphate. A Mg(2+)-binding site is contributed by Asp207.

It belongs to the eukaryotic PMM family. Homodimer.

Its subcellular location is the cytoplasm. The catalysed reaction is alpha-D-mannose 1-phosphate = D-mannose 6-phosphate. The protein operates within nucleotide-sugar biosynthesis; GDP-alpha-D-mannose biosynthesis; alpha-D-mannose 1-phosphate from D-fructose 6-phosphate: step 2/2. In terms of biological role, involved in the synthesis of the GDP-mannose and dolichol-phosphate-mannose required for a number of critical mannosyl transfer reactions. This Babesia bovis protein is Phosphomannomutase (PMM).